The sequence spans 349 residues: RING-H2 finger protein ATL48 (349 aa).

In terms of domain architecture, HIG1 spans Met-1 to Ser-85. Ser-2 is subject to N-acetylserine. 3 consecutive transmembrane segments (helical) span residues Pro-21–Phe-41, Ala-55–Gly-75, and Cys-121–Phe-141. The segment at Cys-207–Arg-249 adopts an RING-type; atypical zinc-finger fold.

Belongs to the RING-type zinc finger family. ATL subfamily.

The protein resides in the membrane. It catalyses the reaction S-ubiquitinyl-[E2 ubiquitin-conjugating enzyme]-L-cysteine + [acceptor protein]-L-lysine = [E2 ubiquitin-conjugating enzyme]-L-cysteine + N(6)-ubiquitinyl-[acceptor protein]-L-lysine.. It functions in the pathway protein modification; protein ubiquitination. The polypeptide is RING-H2 finger protein ATL48 (ATL48) (Arabidopsis thaliana (Mouse-ear cress)).